The sequence spans 415 residues: Na(+)-translocating NADH-quinone reductase subunit B (415 aa).

The next 4 helical transmembrane spans lie at 23 to 40 (WFAL…PGLV), 56 to 76 (IMIM…YNAG), 129 to 149 (FLPI…LFCM), and 164 to 184 (ILFA…LGIT). FMN phosphoryl threonine is present on T236. Helical transmembrane passes span 275–295 (VSTL…IASW), 297–317 (IIGG…VIGS), 325–345 (MPWH…FMAT), 358–378 (WAYG…NPAY), and 381–401 (GMML…HVVV).

It belongs to the NqrB/RnfD family. As to quaternary structure, composed of six subunits; NqrA, NqrB, NqrC, NqrD, NqrE and NqrF. It depends on riboflavin as a cofactor. FMN serves as cofactor.

It localises to the cell inner membrane. It catalyses the reaction a ubiquinone + n Na(+)(in) + NADH + H(+) = a ubiquinol + n Na(+)(out) + NAD(+). Functionally, NQR complex catalyzes the reduction of ubiquinone-1 to ubiquinol by two successive reactions, coupled with the transport of Na(+) ions from the cytoplasm to the periplasm. NqrA to NqrE are probably involved in the second step, the conversion of ubisemiquinone to ubiquinol. This chain is Na(+)-translocating NADH-quinone reductase subunit B, found in Vibrio cholerae serotype O1 (strain ATCC 39541 / Classical Ogawa 395 / O395).